Consider the following 176-residue polypeptide: Ferritin heavy polypeptide-like 17E (176 aa).

Positions 10–159 (QNYDWQCEDA…GYLTNLRQMG (150 aa)) constitute a Ferritin-like diiron domain. C27, E107, and Q141 together coordinate Fe cation.

The protein belongs to the ferritin family. Expressed in the testes and spermatogonia.

This is Ferritin heavy polypeptide-like 17E from Mus musculus (Mouse).